The primary structure comprises 160 residues: Large ribosomal subunit protein uL22c (160 aa).

The protein belongs to the universal ribosomal protein uL22 family. As to quaternary structure, part of the 50S ribosomal subunit.

Its subcellular location is the plastid. It is found in the chloroplast. Its function is as follows. This protein binds specifically to 23S rRNA. In terms of biological role, the globular domain of the protein is located near the polypeptide exit tunnel on the outside of the subunit, while an extended beta-hairpin is found that lines the wall of the exit tunnel in the center of the 70S ribosome. The sequence is that of Large ribosomal subunit protein uL22c (rpl22) from Aethionema grandiflorum (Persian stone-cress).